The following is a 284-amino-acid chain: Tropomyosin (284 aa).

The interval 1–39 (MDAIKKKMQAMKLEKDNAMDRADTLEQQNKEANIRAEKT) is disordered. Positions 1–284 (MDAIKKKMQA…DQTFSELSGY (284 aa)) form a coiled coil. A compositionally biased stretch (basic and acidic residues) spans 12 to 39 (KLEKDNAMDRADTLEQQNKEANIRAEKT).

Belongs to the tropomyosin family. As to quaternary structure, homodimer.

Tropomyosin, in association with the troponin complex, plays a central role in the calcium dependent regulation of muscle contraction. This chain is Tropomyosin (TM1), found in Homarus americanus (American lobster).